Consider the following 268-residue polypeptide: Undecaprenyl-diphosphatase (268 aa).

8 helical membrane-spanning segments follow: residues 9-29 (VILG…TGHL), 47-67 (FDVL…FAKL), 83-103 (FIIG…AAGS), 107-127 (LFLF…AVLL), 144-164 (FPVL…IPGV), 184-204 (AAEF…VYDL), 218-238 (IVAV…KTFL), and 246-266 (FQLF…ALAM).

Belongs to the UppP family.

It localises to the cell inner membrane. It carries out the reaction di-trans,octa-cis-undecaprenyl diphosphate + H2O = di-trans,octa-cis-undecaprenyl phosphate + phosphate + H(+). Its function is as follows. Catalyzes the dephosphorylation of undecaprenyl diphosphate (UPP). Confers resistance to bacitracin. The polypeptide is Undecaprenyl-diphosphatase (Rhodopseudomonas palustris (strain HaA2)).